The sequence spans 124 residues: ATP synthase epsilon chain (124 aa).

The protein belongs to the ATPase epsilon chain family. In terms of assembly, F-type ATPases have 2 components, CF(1) - the catalytic core - and CF(0) - the membrane proton channel. CF(1) has five subunits: alpha(3), beta(3), gamma(1), delta(1), epsilon(1). CF(0) has three main subunits: a, b and c.

It is found in the cell membrane. In terms of biological role, produces ATP from ADP in the presence of a proton gradient across the membrane. This chain is ATP synthase epsilon chain, found in Corynebacterium glutamicum (strain ATCC 13032 / DSM 20300 / JCM 1318 / BCRC 11384 / CCUG 27702 / LMG 3730 / NBRC 12168 / NCIMB 10025 / NRRL B-2784 / 534).